A 308-amino-acid chain; its full sequence is Oxygen-dependent coproporphyrinogen-III oxidase (308 aa).

S100 lines the substrate pocket. A divalent metal cation is bound by residues H104 and H114. H114 serves as the catalytic Proton donor. N116–R118 serves as a coordination point for substrate. A divalent metal cation contacts are provided by H153 and H183. The tract at residues Y248–K283 is important for dimerization. Position 266-268 (G266–R268) interacts with substrate.

This sequence belongs to the aerobic coproporphyrinogen-III oxidase family. Homodimer. A divalent metal cation is required as a cofactor.

It is found in the cytoplasm. It catalyses the reaction coproporphyrinogen III + O2 + 2 H(+) = protoporphyrinogen IX + 2 CO2 + 2 H2O. It functions in the pathway porphyrin-containing compound metabolism; protoporphyrin-IX biosynthesis; protoporphyrinogen-IX from coproporphyrinogen-III (O2 route): step 1/1. In terms of biological role, involved in the heme biosynthesis. Catalyzes the aerobic oxidative decarboxylation of propionate groups of rings A and B of coproporphyrinogen-III to yield the vinyl groups in protoporphyrinogen-IX. The sequence is that of Oxygen-dependent coproporphyrinogen-III oxidase from Francisella philomiragia subsp. philomiragia (strain ATCC 25017 / CCUG 19701 / FSC 153 / O#319-036).